Consider the following 612-residue polypeptide: tRNA(Met) cytidine acetyltransferase TmcA (612 aa).

ATP contacts are provided by residues Q136, 161–170 (GRGKSTLLGQ), and R284. Residues 319–499 (KHASELEEAL…PAAIYALPLT (181 aa)) enclose the N-acetyltransferase domain. Acetyl-CoA is bound at residue 424–426 (IAV).

It belongs to the RNA cytidine acetyltransferase family. TmcA subfamily.

Its subcellular location is the cytoplasm. The enzyme catalyses cytidine(34) in elongator tRNA(Met) + acetyl-CoA + ATP + H2O = N(4)-acetylcytidine(34) in elongator tRNA(Met) + ADP + phosphate + CoA + H(+). Its function is as follows. Catalyzes the formation of N(4)-acetylcytidine (ac(4)C) at the wobble position of tRNA(Met), by using acetyl-CoA as an acetyl donor and ATP (or GTP). This is tRNA(Met) cytidine acetyltransferase TmcA from Idiomarina loihiensis (strain ATCC BAA-735 / DSM 15497 / L2-TR).